The primary structure comprises 425 residues: Serine--tRNA ligase (425 aa).

233 to 235 (TAE) lines the L-serine pocket. ATP is bound at residue 264-266 (RRE). Position 287 (Glu287) interacts with L-serine. 351–354 (EISS) lines the ATP pocket. Ser387 lines the L-serine pocket.

The protein belongs to the class-II aminoacyl-tRNA synthetase family. Type-1 seryl-tRNA synthetase subfamily. In terms of assembly, homodimer. The tRNA molecule binds across the dimer.

Its subcellular location is the cytoplasm. It catalyses the reaction tRNA(Ser) + L-serine + ATP = L-seryl-tRNA(Ser) + AMP + diphosphate + H(+). It carries out the reaction tRNA(Sec) + L-serine + ATP = L-seryl-tRNA(Sec) + AMP + diphosphate + H(+). Its pathway is aminoacyl-tRNA biosynthesis; selenocysteinyl-tRNA(Sec) biosynthesis; L-seryl-tRNA(Sec) from L-serine and tRNA(Sec): step 1/1. Its function is as follows. Catalyzes the attachment of serine to tRNA(Ser). Is also able to aminoacylate tRNA(Sec) with serine, to form the misacylated tRNA L-seryl-tRNA(Sec), which will be further converted into selenocysteinyl-tRNA(Sec). This Thermotoga maritima (strain ATCC 43589 / DSM 3109 / JCM 10099 / NBRC 100826 / MSB8) protein is Serine--tRNA ligase.